The primary structure comprises 473 residues: Transposase for insertion sequence element IS1151 (473 aa).

The protein belongs to the transposase 11 family.

Functionally, involved in the transposition of the insertion sequence. The protein is Transposase for insertion sequence element IS1151 (tnp) of Clostridium perfringens.